Here is a 245-residue protein sequence, read N- to C-terminus: Phosducin (245 aa).

Positions 1-70 (MEKAKSQSLE…DKDSKERFSR (70 aa)) are disordered. Residues 1–244 (MEKAKSQSLE…LEQTNMEEDM (244 aa)) form the Phosducin domain. 2 stretches are compositionally biased toward basic and acidic residues: residues 28–50 (DWRK…KEIL) and 58–69 (SRDDKDSKERFS). Position 73 is a phosphoserine; by PKA (Ser73). A thioredoxin fold region spans residues 111–245 (YGFVYELESG…EQTNMEEDME (135 aa)).

It belongs to the phosducin family. In terms of assembly, interacts with CRX. Forms a complex with the beta and gamma subunits of the GTP-binding protein, transducin. In terms of processing, light-induced changes in cyclic nucleotide levels modulate the phosphorylation of this protein by cAMP kinase.

It localises to the cytoplasm. The protein resides in the cytosol. It is found in the nucleus. Its subcellular location is the cell projection. The protein localises to the cilium. It localises to the photoreceptor outer segment. The protein resides in the photoreceptor inner segment. Functionally, inhibits the transcriptional activation activity of the cone-rod homeobox CRX. May participate in the regulation of visual phototransduction or in the integration of photoreceptor metabolism. This chain is Phosducin (PDC), found in Bos taurus (Bovine).